The chain runs to 352 residues: Holliday junction branch migration complex subunit RuvB (352 aa).

Residues 1–42 (MAIVSSSAGRADSQPPAAKSRVVDASPLPEEASPAREDGLRP) are disordered. The tract at residues 13–201 (SQPPAAKSRV…FGLIQRLEFY (189 aa)) is large ATPase domain (RuvB-L). The span at 33–42 (SPAREDGLRP) shows a compositional bias: basic and acidic residues. ATP contacts are provided by L40, R41, G82, K85, T86, T87, R191, Y201, and R238. Residue T86 coordinates Mg(2+). Residues 202 to 273 (GLEDLQAIVE…LVDEALTLHR (72 aa)) form a small ATPAse domain (RuvB-S) region. The tract at residues 276–352 (ARGLDASDRR…RRHLGWPELP (77 aa)) is head domain (RuvB-H). Residues R331 and R336 each coordinate DNA.

It belongs to the RuvB family. Homohexamer. Forms an RuvA(8)-RuvB(12)-Holliday junction (HJ) complex. HJ DNA is sandwiched between 2 RuvA tetramers; dsDNA enters through RuvA and exits via RuvB. An RuvB hexamer assembles on each DNA strand where it exits the tetramer. Each RuvB hexamer is contacted by two RuvA subunits (via domain III) on 2 adjacent RuvB subunits; this complex drives branch migration. In the full resolvosome a probable DNA-RuvA(4)-RuvB(12)-RuvC(2) complex forms which resolves the HJ.

It localises to the cytoplasm. It carries out the reaction ATP + H2O = ADP + phosphate + H(+). Its function is as follows. The RuvA-RuvB-RuvC complex processes Holliday junction (HJ) DNA during genetic recombination and DNA repair, while the RuvA-RuvB complex plays an important role in the rescue of blocked DNA replication forks via replication fork reversal (RFR). RuvA specifically binds to HJ cruciform DNA, conferring on it an open structure. The RuvB hexamer acts as an ATP-dependent pump, pulling dsDNA into and through the RuvAB complex. RuvB forms 2 homohexamers on either side of HJ DNA bound by 1 or 2 RuvA tetramers; 4 subunits per hexamer contact DNA at a time. Coordinated motions by a converter formed by DNA-disengaged RuvB subunits stimulates ATP hydrolysis and nucleotide exchange. Immobilization of the converter enables RuvB to convert the ATP-contained energy into a lever motion, pulling 2 nucleotides of DNA out of the RuvA tetramer per ATP hydrolyzed, thus driving DNA branch migration. The RuvB motors rotate together with the DNA substrate, which together with the progressing nucleotide cycle form the mechanistic basis for DNA recombination by continuous HJ branch migration. Branch migration allows RuvC to scan DNA until it finds its consensus sequence, where it cleaves and resolves cruciform DNA. This chain is Holliday junction branch migration complex subunit RuvB, found in Prochlorococcus marinus (strain MIT 9303).